Consider the following 226-residue polypeptide: Ribonuclease HII (226 aa).

An RNase H type-2 domain is found at 24–216; the sequence is QRLCGVDEAG…VRKVLERGMV (193 aa). The a divalent metal cation site is built by Asp-30, Glu-31, and Asp-125.

Belongs to the RNase HII family. Mn(2+) is required as a cofactor. The cofactor is Mg(2+).

The protein resides in the cytoplasm. The enzyme catalyses Endonucleolytic cleavage to 5'-phosphomonoester.. Functionally, endonuclease that specifically degrades the RNA of RNA-DNA hybrids. The chain is Ribonuclease HII from Cupriavidus metallidurans (strain ATCC 43123 / DSM 2839 / NBRC 102507 / CH34) (Ralstonia metallidurans).